Reading from the N-terminus, the 209-residue chain is Large ribosomal subunit protein uL3 (209 aa).

Residues 133-152 (THGNSLSHRVPGSIGQNQTP) form a disordered region. At glutamine 150 the chain carries N5-methylglutamine.

Belongs to the universal ribosomal protein uL3 family. Part of the 50S ribosomal subunit. Forms a cluster with proteins L14 and L19. In terms of processing, methylated by PrmB.

Its function is as follows. One of the primary rRNA binding proteins, it binds directly near the 3'-end of the 23S rRNA, where it nucleates assembly of the 50S subunit. The chain is Large ribosomal subunit protein uL3 from Sodalis glossinidius (strain morsitans).